A 296-amino-acid chain; its full sequence is Protoheme IX farnesyltransferase (296 aa).

9 helical membrane-spanning segments follow: residues 29–49 (LSGLVIVTSAGGLALAPGHVA), 54–74 (ALTVLATAAVVGAANALNCWM), 98–118 (FTALGLGIMVPVFALPVLALV), 121–141 (PLTAALAFVALVTYVAVYTPM), 147–167 (LALLVGAVPGAIPPLMGWTAA), 175–195 (GLALFALLFAWQLPHFLAVSI), 221–241 (WIAATAAALVPVSLLLVPLRV), 246–266 (YGAVAAVLGVALAGYAFAGVG), and 275–295 (NFFLATILYLTLLFVALFLGA).

Belongs to the UbiA prenyltransferase family. Protoheme IX farnesyltransferase subfamily.

It is found in the cell inner membrane. It carries out the reaction heme b + (2E,6E)-farnesyl diphosphate + H2O = Fe(II)-heme o + diphosphate. It functions in the pathway porphyrin-containing compound metabolism; heme O biosynthesis; heme O from protoheme: step 1/1. In terms of biological role, converts heme B (protoheme IX) to heme O by substitution of the vinyl group on carbon 2 of heme B porphyrin ring with a hydroxyethyl farnesyl side group. The sequence is that of Protoheme IX farnesyltransferase from Anaeromyxobacter sp. (strain Fw109-5).